A 279-amino-acid polypeptide reads, in one-letter code: MAFQGTSRTLTQQSSAATSDELQKILFSPDAIKKMAAECDLGRHHWMRADNAISVRPLVPEVTHGRIASFFKSGYDAGELCSKGYMSVPQVLCAVTRTVSTDAEGSLRIYLADLGDKELSPIDKQCVTLHNHDLPALVSFQPTYDCPMETVGNRKRCFAVVVERHGYVGYTGTTASVCSNWQARFSSKNNNYTHIAAGKTLVLPFNRLAEQTKPSAVARLLKSQLNNIESSQYVLTDSKINQNARSESEELNVESPPVAIGSSSASRFESFRPQVVNGL.

It belongs to the cucumovirus movement protein family.

It localises to the host cell junction. The protein localises to the host plasmodesma. Functionally, transports viral genome to neighboring plant cells directly through plasmosdesmata, without any budding. The movement protein allows efficient cell to cell propagation, by bypassing the host cell wall barrier. Acts by forming a tubular structure at the host plasmodesmata, enlarging it enough to allow free passage of virion capsids. This is Movement protein from Cucumis sativus (Cucumber).